We begin with the raw amino-acid sequence, 277 residues long: F420-dependent methylenetetrahydromethanopterin dehydrogenase (277 aa).

This sequence belongs to the MTD family.

It carries out the reaction 5,10-methylenetetrahydromethanopterin + oxidized coenzyme F420-(gamma-L-Glu)(n) + 2 H(+) = 5,10-methenyl-5,6,7,8-tetrahydromethanopterin + reduced coenzyme F420-(gamma-L-Glu)(n). It functions in the pathway one-carbon metabolism; methanogenesis from CO(2); 5,10-methylene-5,6,7,8-tetrahydromethanopterin from 5,10-methenyl-5,6,7,8-tetrahydromethanopterin (coenzyme F420 route): step 1/1. Catalyzes the reversible reduction of methenyl-H(4)MPT(+) to methylene-H(4)MPT. This Methanococcus maripaludis (strain C7 / ATCC BAA-1331) protein is F420-dependent methylenetetrahydromethanopterin dehydrogenase.